Consider the following 357-residue polypeptide: MIQKRKTRQIRVGNVKIGGDAPIVVQSMTSTKTHDVEATLNQIKRLYEAGCEIVRVAVPHKEDVEALEEIVKKSPMPVIADIHFAPSYAFLSMEKGVHGIRINPGNIGKEEIVREIVEEAKRRGVAVRIGVNSGSLEKDLLEKYGYPSAEALAESALRWSEKFEKWGFTNYKVSIKGSDVLQNVRANLIFAERTDVPLHIGITEAGMGTKGIIKSSVGIGILLYMGIGDTVRVSLTDDPVVEVETAYEILKSLGLRRRGVEIVACPTCGRIEVDLPKVVKEVQEKLSGVKTPLKVAVMGCVVNAIGEAREADIGLACGRGFAWLFKHGKPIKKVDESEMVDELLKEIQNMEKDGGTN.

[4Fe-4S] cluster contacts are provided by C265, C268, C300, and E307.

Belongs to the IspG family. As to quaternary structure, homodimer. The cofactor is [4Fe-4S] cluster.

It catalyses the reaction (2E)-4-hydroxy-3-methylbut-2-enyl diphosphate + oxidized [flavodoxin] + H2O + 2 H(+) = 2-C-methyl-D-erythritol 2,4-cyclic diphosphate + reduced [flavodoxin]. The protein operates within isoprenoid biosynthesis; isopentenyl diphosphate biosynthesis via DXP pathway; isopentenyl diphosphate from 1-deoxy-D-xylulose 5-phosphate: step 5/6. In terms of biological role, converts 2C-methyl-D-erythritol 2,4-cyclodiphosphate (ME-2,4cPP) into 1-hydroxy-2-methyl-2-(E)-butenyl 4-diphosphate. This chain is 4-hydroxy-3-methylbut-2-en-1-yl diphosphate synthase (flavodoxin), found in Aquifex aeolicus (strain VF5).